The sequence spans 330 residues: Putative ADP-ribosyl glycohydrolase L543 (330 aa).

Belongs to the ADP-ribosylglycohydrolase family.

The polypeptide is Putative ADP-ribosyl glycohydrolase L543 (Acanthamoeba polyphaga mimivirus (APMV)).